A 568-amino-acid chain; its full sequence is Potassium-transporting ATPase potassium-binding subunit (568 aa).

Helical transmembrane passes span 7-27 (AEIAFILGLTVALGWPLGLFL), 65-85 (SYALALLAFSAASFILLYAIL), 135-155 (AGLTSHNFLSAAAGIAVAAAV), 177-197 (VSLYLLLPLSIVIALVFVALG), 254-274 (LTNLIEIVEMNVLGFACVVAF), 286-306 (ALITVMAIFVAVAASVIYWTE), 383-403 (GLYGMIVLALIAVFVAGLMVG), 422-442 (MLAVLILPLAILGFSAAAAVL), 489-509 (LGIAMLLGRFGYVIPVLAIAG), and 530-550 (LFIGLLIGVILILGGLQFFPA).

This sequence belongs to the KdpA family. As to quaternary structure, the system is composed of three essential subunits: KdpA, KdpB and KdpC.

It localises to the cell inner membrane. Part of the high-affinity ATP-driven potassium transport (or Kdp) system, which catalyzes the hydrolysis of ATP coupled with the electrogenic transport of potassium into the cytoplasm. This subunit binds the periplasmic potassium ions and delivers the ions to the membrane domain of KdpB through an intramembrane tunnel. This chain is Potassium-transporting ATPase potassium-binding subunit, found in Beijerinckia indica subsp. indica (strain ATCC 9039 / DSM 1715 / NCIMB 8712).